The primary structure comprises 34 residues: Photosystem I reaction center subunit XII (34 aa).

A helical transmembrane segment spans residues 10-32 (VFVALVVAAHAAVLALRLSISLY).

This sequence belongs to the PsaM family.

Its subcellular location is the cellular thylakoid membrane. The polypeptide is Photosystem I reaction center subunit XII (Parasynechococcus marenigrum (strain WH8102)).